A 213-amino-acid polypeptide reads, in one-letter code: Ribonuclease HII (213 aa).

The RNase H type-2 domain maps to 1–206 (MICGVDEAGK…VSTLLAKKTQ (206 aa)). Residues Asp-6, Glu-7, and Asp-101 each coordinate a divalent metal cation.

Belongs to the RNase HII family. The cofactor is Mn(2+). It depends on Mg(2+) as a cofactor.

It is found in the cytoplasm. It catalyses the reaction Endonucleolytic cleavage to 5'-phosphomonoester.. In terms of biological role, endonuclease that specifically degrades the RNA of RNA-DNA hybrids. The protein is Ribonuclease HII of Methanoregula boonei (strain DSM 21154 / JCM 14090 / 6A8).